Reading from the N-terminus, the 67-residue chain is UPF0337 protein SP_1805 (67 aa).

The segment at 1–30 (MSVEEKLNQAKGSIKEGVGKAIGDEKMEKE) is disordered.

Belongs to the UPF0337 (CsbD) family.

This is UPF0337 protein SP_1805 from Streptococcus pneumoniae serotype 4 (strain ATCC BAA-334 / TIGR4).